Here is an 804-residue protein sequence, read N- to C-terminus: ATP-dependent RNA helicase dbp4 (804 aa).

The segment at 1–24 (MAPANAPRNGKYAKSSQRTLKRKR) is disordered. Positions 46–74 (KAFTDLPLSEPTLSGLSASHYKTLTDIQS) match the Q motif motif. The Helicase ATP-binding domain occupies 77–251 (VSHALKGRDI…RLSLQDPEYV (175 aa)). An ATP-binding site is contributed by 90–97 (AKTGSGKT). The DEAD box motif lies at 199-202 (DEAD). Residues 277–436 (KLDILWSFIR…SIKNQLQNMC (160 aa)) form the Helicase C-terminal domain. Disordered regions lie at residues 493-541 (GDDT…DRMF), 589-615 (DKQL…KDVK), and 695-804 (LADV…GLLG). The segment covering 521–541 (DEKKSKKKDAPQVRTKYDRMF) has biased composition (basic and acidic residues). A compositionally biased stretch (basic and acidic residues) spans 695–705 (LADVEDKELVK). Residues 706-715 (QKRREKKEKR) show a composition bias toward basic residues.

It belongs to the DEAD box helicase family. DDX10/DBP4 subfamily. As to quaternary structure, interacts with the U3 and U14 snoRNAs. Associates with pre-ribosomal complexes.

Its subcellular location is the nucleus. The protein resides in the nucleolus. It catalyses the reaction ATP + H2O = ADP + phosphate + H(+). Functionally, ATP-dependent RNA helicase required for ribosome biogenesis. Involved in the release of U14 snoRNA in pre-ribosomal complexes. Required for pre-rRNA cleavage at site A2. The protein is ATP-dependent RNA helicase dbp4 (dbp4) of Aspergillus terreus (strain NIH 2624 / FGSC A1156).